Consider the following 79-residue polypeptide: Ponericin-W-like 32.1 (79 aa).

Positions 1–23 (MKCKKQLLVIFFAYFLVVNESEA) are cleaved as a signal peptide. A propeptide spanning residues 49 to 79 (RALMKRDLEDIMDPYQKNLKLDRYLRRLAMD) is cleaved from the precursor.

Belongs to the non-disulfide-bridged peptide (NDBP) superfamily. Medium-length antimicrobial peptide (group 3) family. Ponericin-W subfamily. As to expression, expressed by the venom gland.

It localises to the secreted. The protein localises to the target cell membrane. Its function is as follows. Antimicrobial peptide with potent activity against a range of Gram-positive and Gram-negative bacteria. Has high hemolytic activity against erythrocytes. May act by disrupting the integrity of the bacterial cell membrane. The chain is Ponericin-W-like 32.1 from Lychas mucronatus (Chinese swimming scorpion).